Consider the following 355-residue polypeptide: S-methyl-5'-thioadenosine phosphorylase (355 aa).

Phosphate contacts are provided by residues Thr-45, 91-92, and 124-125; these read RH and SA. Met-226 provides a ligand contact to substrate. Position 227 (Ser-227) interacts with phosphate. Residue 250-252 participates in substrate binding; that stretch reads DYD.

Belongs to the PNP/MTAP phosphorylase family. MTAP subfamily. Homotrimer.

It localises to the cytoplasm. The protein localises to the nucleus. The enzyme catalyses S-methyl-5'-thioadenosine + phosphate = 5-(methylsulfanyl)-alpha-D-ribose 1-phosphate + adenine. It functions in the pathway amino-acid biosynthesis; L-methionine biosynthesis via salvage pathway; S-methyl-5-thio-alpha-D-ribose 1-phosphate from S-methyl-5'-thioadenosine (phosphorylase route): step 1/1. In terms of biological role, catalyzes the reversible phosphorylation of S-methyl-5'-thioadenosine (MTA) to adenine and 5-methylthioribose-1-phosphate. Involved in the breakdown of MTA, a major by-product of polyamine biosynthesis. Responsible for the first step in the methionine salvage pathway after MTA has been generated from S-adenosylmethionine. Has broad substrate specificity with 6-aminopurine nucleosides as preferred substrates. This is S-methyl-5'-thioadenosine phosphorylase from Emericella nidulans (strain FGSC A4 / ATCC 38163 / CBS 112.46 / NRRL 194 / M139) (Aspergillus nidulans).